Here is a 351-residue protein sequence, read N- to C-terminus: MGITVRNLHKRFGEFAALDDVSLDFPAGELVALLGPSGCGKTTLLRVIAGLEHADSGQVVLQGLDVASVGARERQVGFVFQHYALFRHMTVFENVAFGLRVKPRRERPSEAAIRAKVHELLSLVQLDWLAQRYPSELSGGQRQRIALARALAVEPKVLLLDEPFGALDAKVRKELRGWLRRLHDDLHISTIFVTHDQEEALEVADRIVVLNHGRVEQVGSPQAVYDHPRSAFVYEFLGAANRLDGTVSGNGFVAHGAAQAIAVDADFAGPARAYVRPHDLELAAPHARAQGIAADVRRVVPLGGSVRVELAARSGEVLEAELDRNAWRALALDVGDALTAVPRAVRVFPAR.

In terms of domain architecture, ABC transporter spans 3-237 (ITVRNLHKRF…PRSAFVYEFL (235 aa)). 35–42 (GPSGCGKT) is an ATP binding site.

This sequence belongs to the ABC transporter superfamily. Sulfate/tungstate importer (TC 3.A.1.6) family. As to quaternary structure, the complex is composed of two ATP-binding proteins (CysA), two transmembrane proteins (CysT and CysW) and a solute-binding protein (CysP).

The protein resides in the cell inner membrane. The enzyme catalyses sulfate(out) + ATP + H2O = sulfate(in) + ADP + phosphate + H(+). It carries out the reaction thiosulfate(out) + ATP + H2O = thiosulfate(in) + ADP + phosphate + H(+). Functionally, part of the ABC transporter complex CysAWTP involved in sulfate/thiosulfate import. Responsible for energy coupling to the transport system. This Burkholderia mallei (strain ATCC 23344) protein is Sulfate/thiosulfate import ATP-binding protein CysA.